A 31-amino-acid chain; its full sequence is Cytochrome b6-f complex subunit 6 (31 aa).

Residues 4-24 (VISYFGFLLVALAFTLVTYLG) traverse the membrane as a helical segment.

Belongs to the PetL family. In terms of assembly, the 4 large subunits of the cytochrome b6-f complex are cytochrome b6, subunit IV (17 kDa polypeptide, PetD), cytochrome f and the Rieske protein, while the 4 small subunits are PetG, PetL, PetM and PetN. The complex functions as a dimer.

It is found in the plastid. The protein localises to the chloroplast thylakoid membrane. Functionally, component of the cytochrome b6-f complex, which mediates electron transfer between photosystem II (PSII) and photosystem I (PSI), cyclic electron flow around PSI, and state transitions. PetL is important for photoautotrophic growth as well as for electron transfer efficiency and stability of the cytochrome b6-f complex. In Nephroselmis olivacea (Green alga), this protein is Cytochrome b6-f complex subunit 6.